We begin with the raw amino-acid sequence, 30 residues long: 2-enoate reductase (30 aa).

Dodecamer; tetramer of trimers. Iron-sulfur cluster serves as cofactor. Requires FAD as cofactor. The cofactor is FMN.

It catalyses the reaction butanoate + NAD(+) = (2E)-2-butenoate + NADH + H(+). Functionally, involved in fermentation of amino acids (Stickland reaction) such as leucine, isoleucine, valine and phenylalanine. This Clostridium tyrobutyricum protein is 2-enoate reductase.